Here is a 281-residue protein sequence, read N- to C-terminus: Bifunctional N-acyl-homoserine lactone acylase/prephenate dehydratase (281 aa).

The region spanning 6 to 181 (IIAFQGRPGA…NTTRFYIASR (176 aa)) is the Prephenate dehydratase domain. The region spanning 196–273 (TLLFRVNNQP…EQQEILGVYP (78 aa)) is the ACT domain. Residues Ala-207, Leu-208, Asn-221, and Met-222 each contribute to the L-phenylalanine site.

In terms of assembly, homodimer.

It catalyses the reaction an N-acyl-L-homoserine lactone + H2O = L-homoserine lactone + a carboxylate. It carries out the reaction prephenate + H(+) = 3-phenylpyruvate + CO2 + H2O. The protein operates within amino-acid biosynthesis; L-phenylalanine biosynthesis; phenylpyruvate from prephenate: step 1/1. Multifunctional enzyme that acts on N-acyl-homoserine lactones (AHLs), beta-lactam antibiotics and shows prephenate dehydratase activity. Acts as an acylase on AHL and hydrolyzes the amide bond of the acyl side-chain of AHL molecules, releasing homoserine lactone (HSL) and the fatty acid. Can use different 3-oxo-acyl homoserine lactones, such as 3-oxo-decanoyl homoserine lactone, which is the preferred substrate, 3-oxo-octanoyl homoserine lactone, 3-oxo-hexanoyl homoserine lactone and 3-oxo-dodecanoyl homoserine lactone. It can also degrade various beta-lactam antibiotics, including penicillin G, amoxicillin and ampicillin, but not cefotaxime. In addition, it can complement a phenylalanine auxotrophic E.coli mutant, which carries a kanamycin gene inserted into pheA, suggesting that GqqA can also function as a prephenate dehydratase. Involved in bacterial quorum quenching (QQ) and cellulose biofilm formation. In Komagataeibacter europaeus (Gluconacetobacter europaeus), this protein is Bifunctional N-acyl-homoserine lactone acylase/prephenate dehydratase.